Reading from the N-terminus, the 389-residue chain is Xylose isomerase (389 aa).

Active-site residues include His-54 and Asp-57. Residues Glu-181, Glu-217, His-220, Asp-245, Asp-255, Asp-257, and Asp-287 each coordinate Mg(2+).

It belongs to the xylose isomerase family. Homotetramer. Requires Mg(2+) as cofactor.

It localises to the cytoplasm. It carries out the reaction alpha-D-xylose = alpha-D-xylulofuranose. Functionally, involved in D-xylose catabolism. The protein is Xylose isomerase (xylA) of Streptomyces violaceusniger.